A 272-amino-acid chain; its full sequence is Acyl-[acyl-carrier-protein]--UDP-N-acetylglucosamine O-acyltransferase (272 aa).

It belongs to the transferase hexapeptide repeat family. LpxA subfamily. In terms of assembly, homotrimer.

It localises to the cytoplasm. The enzyme catalyses a (3R)-hydroxyacyl-[ACP] + UDP-N-acetyl-alpha-D-glucosamine = a UDP-3-O-[(3R)-3-hydroxyacyl]-N-acetyl-alpha-D-glucosamine + holo-[ACP]. It participates in glycolipid biosynthesis; lipid IV(A) biosynthesis; lipid IV(A) from (3R)-3-hydroxytetradecanoyl-[acyl-carrier-protein] and UDP-N-acetyl-alpha-D-glucosamine: step 1/6. Functionally, involved in the biosynthesis of lipid A, a phosphorylated glycolipid that anchors the lipopolysaccharide to the outer membrane of the cell. This Rhizobium johnstonii (strain DSM 114642 / LMG 32736 / 3841) (Rhizobium leguminosarum bv. viciae) protein is Acyl-[acyl-carrier-protein]--UDP-N-acetylglucosamine O-acyltransferase.